Reading from the N-terminus, the 471-residue chain is GTPase Der (471 aa).

2 consecutive EngA-type G domains span residues 5–168 (PVIA…TDLE) and 186–359 (IRVA…DSAF). Residues 11 to 18 (GRPNVGKS), 58 to 62 (DTGGI), 120 to 123 (NKTD), 192 to 199 (GRPNVGKS), 239 to 243 (DTAGV), and 304 to 307 (NKWD) contribute to the GTP site. Residues 360 to 444 (IKIGTNELTR…PIRLEFKSGT (85 aa)) form the KH-like domain.

The protein belongs to the TRAFAC class TrmE-Era-EngA-EngB-Septin-like GTPase superfamily. EngA (Der) GTPase family. In terms of assembly, associates with the 50S ribosomal subunit.

GTPase that plays an essential role in the late steps of ribosome biogenesis. This is GTPase Der from Alcanivorax borkumensis (strain ATCC 700651 / DSM 11573 / NCIMB 13689 / SK2).